Reading from the N-terminus, the 633-residue chain is Chaperone protein dnaK2 (633 aa).

Thr196 is subject to Phosphothreonine; by autocatalysis. Positions 600–633 (ATADGGPAQHAATGGPTSGGGGGDDVIDAEFDKG) are disordered. Residues 624 to 633 (DVIDAEFDKG) show a composition bias toward acidic residues.

This sequence belongs to the heat shock protein 70 family.

In terms of biological role, acts as a chaperone. The polypeptide is Chaperone protein dnaK2 (dnaK2) (Streptomyces avermitilis (strain ATCC 31267 / DSM 46492 / JCM 5070 / NBRC 14893 / NCIMB 12804 / NRRL 8165 / MA-4680)).